The following is a 602-amino-acid chain: Threonine--tRNA ligase (602 aa).

Positions 208 to 499 (DHRKLGTELK…LTEHCAGEFP (292 aa)) are catalytic. Zn(2+)-binding residues include Cys-300, His-351, and His-476.

The protein belongs to the class-II aminoacyl-tRNA synthetase family. Homodimer. Zn(2+) is required as a cofactor.

The protein localises to the cytoplasm. It carries out the reaction tRNA(Thr) + L-threonine + ATP = L-threonyl-tRNA(Thr) + AMP + diphosphate + H(+). Functionally, catalyzes the attachment of threonine to tRNA(Thr) in a two-step reaction: L-threonine is first activated by ATP to form Thr-AMP and then transferred to the acceptor end of tRNA(Thr). Also edits incorrectly charged L-seryl-tRNA(Thr). The polypeptide is Threonine--tRNA ligase (Campylobacter jejuni subsp. jejuni serotype O:23/36 (strain 81-176)).